The chain runs to 140 residues: Holo-[acyl-carrier-protein] synthase (140 aa).

2 residues coordinate Mg(2+): D8 and E62.

The protein belongs to the P-Pant transferase superfamily. AcpS family. Mg(2+) serves as cofactor.

It is found in the cytoplasm. The enzyme catalyses apo-[ACP] + CoA = holo-[ACP] + adenosine 3',5'-bisphosphate + H(+). Its function is as follows. Transfers the 4'-phosphopantetheine moiety from coenzyme A to a Ser of acyl-carrier-protein. This Cupriavidus pinatubonensis (strain JMP 134 / LMG 1197) (Cupriavidus necator (strain JMP 134)) protein is Holo-[acyl-carrier-protein] synthase.